A 229-amino-acid polypeptide reads, in one-letter code: Transcriptional activator protein YukR (229 aa).

The region spanning Asp157 to Glu222 is the HTH luxR-type domain. Positions Tyr181–Gly200 form a DNA-binding region, H-T-H motif.

The protein belongs to the autoinducer-regulated transcriptional regulatory protein family.

Probable transcriptional activator. Binds to an autoinducer molecule. This is Transcriptional activator protein YukR (yukR) from Yersinia ruckeri.